Here is an 87-residue protein sequence, read N- to C-terminus: Defensin-like protein 176 (87 aa).

The first 23 residues, 1–23 (MAKATSSLVVPIIFLVIFALVEQ), serve as a signal peptide directing secretion. Cystine bridges form between cysteine 27-cysteine 66, cysteine 36-cysteine 55, cysteine 39-cysteine 60, and cysteine 43-cysteine 62.

Belongs to the DEFL family.

The protein localises to the secreted. The protein is Defensin-like protein 176 (LCR65) of Arabidopsis thaliana (Mouse-ear cress).